Here is a 113-residue protein sequence, read N- to C-terminus: T cell receptor alpha variable 36/delta variable 7 (113 aa).

A signal peptide spans 1-21; the sequence is MMKCPQALLAIFWLLLSWVSS. The Ig-like domain occupies 23 to 113; that stretch reads DKVVQSPLSL…DSAIYLCAVE (91 aa). N-linked (GlcNAc...) asparagine glycans are attached at residues asparagine 43 and asparagine 96. Cysteine 44 and cysteine 110 are oxidised to a cystine.

In terms of assembly, alpha-beta TR is a heterodimer composed of an alpha and beta chain; disulfide-linked. The alpha-beta TR is associated with the transmembrane signaling CD3 coreceptor proteins to form the TR-CD3 (TcR or TCR). The assembly of alpha-beta TR heterodimers with CD3 occurs in the endoplasmic reticulum where a single alpha-beta TR heterodimer associates with one CD3D-CD3E heterodimer, one CD3G-CD3E heterodimer and one CD247 homodimer forming a stable octameric structure. CD3D-CD3E and CD3G-CD3E heterodimers preferentially associate with TR alpha and TR beta chains, respectively. The association of the CD247 homodimer is the last step of TcR assembly in the endoplasmic reticulum and is required for transport to the cell surface.

Its subcellular location is the cell membrane. Functionally, v region of the variable domain of T cell receptor (TR) alpha chain that participates in the antigen recognition. Alpha-beta T cell receptors are antigen specific receptors which are essential to the immune response and are present on the cell surface of T lymphocytes. Recognize peptide-major histocompatibility (MH) (pMH) complexes that are displayed by antigen presenting cells (APC), a prerequisite for efficient T cell adaptive immunity against pathogens. Binding of alpha-beta TR to pMH complex initiates TR-CD3 clustering on the cell surface and intracellular activation of LCK that phosphorylates the ITAM motifs of CD3G, CD3D, CD3E and CD247 enabling the recruitment of ZAP70. In turn ZAP70 phosphorylates LAT, which recruits numerous signaling molecules to form the LAT signalosome. The LAT signalosome propagates signal branching to three major signaling pathways, the calcium, the mitogen-activated protein kinase (MAPK) kinase and the nuclear factor NF-kappa-B (NF-kB) pathways, leading to the mobilization of transcription factors that are critical for gene expression and essential for T cell growth and differentiation. The T cell repertoire is generated in the thymus, by V-(D)-J rearrangement. This repertoire is then shaped by intrathymic selection events to generate a peripheral T cell pool of self-MH restricted, non-autoaggressive T cells. Post-thymic interaction of alpha-beta TR with the pMH complexes shapes TR structural and functional avidity. This Homo sapiens (Human) protein is T cell receptor alpha variable 36/delta variable 7.